Reading from the N-terminus, the 801-residue chain is Transferrin receptor protein 2 (801 aa).

Residues 1–83 lie on the Cytoplasmic side of the membrane; sequence MERLWGLFQR…WAAAGRRAAP (83 aa). Residues 16 to 45 form a disordered region; the sequence is PRSSQTVYQRVEGPRKGHLEEEEEDGEEGA. The short motif at 23–26 is the Endocytosis signal element; it reads YQRV. Acidic residues predominate over residues 35–45; sequence EEEEEDGEEGA. A helical; Signal-anchor for type II membrane protein membrane pass occupies residues 84–104; that stretch reads YLVLTALLIFTGAFLLGYVAF. At 105 to 801 the chain is on the extracellular side; it reads RGSCQACGDS…GDVWNIDNNF (697 aa). N-linked (GlcNAc...) asparagine glycans are attached at residues Asn-240, Asn-339, Asn-540, and Asn-754.

The protein belongs to the peptidase M28 family. M28B subfamily. As to quaternary structure, homodimer. As to expression, predominantly expressed in liver. While the alpha form is also expressed in spleen, lung, muscle, prostate and peripheral blood mononuclear cells, the beta form is expressed in all tissues tested, albeit weakly.

The protein resides in the cell membrane. The protein localises to the cytoplasm. In terms of biological role, mediates cellular uptake of transferrin-bound iron in a non-iron dependent manner. May be involved in iron metabolism, hepatocyte function and erythrocyte differentiation. In Homo sapiens (Human), this protein is Transferrin receptor protein 2 (TFR2).